The following is a 339-amino-acid chain: 2'-deoxymugineic-acid 2'-dioxygenase (339 aa).

Residues G184–P284 form the Fe2OG dioxygenase domain. Residues H209, D211, and H265 each contribute to the Fe cation site. R275 lines the 2-oxoglutarate pocket.

The protein belongs to the iron/ascorbate-dependent oxidoreductase family. Fe(2+) is required as a cofactor. L-ascorbate serves as cofactor. Post-translationally, the N-terminus is blocked.

It is found in the cytoplasm. The catalysed reaction is 2'-deoxymugineate + 2-oxoglutarate + O2 = mugineate + succinate + CO2. Its function is as follows. Involved in the biosynthesis of mugineic acid family of phytosiderophores. Hydroxylates the C-2' positions of 2'-deoxymugineic acid (DMA) and 3-epihydroxymugineic acid (epiHDMA). May be involved in boron tolerance. The protein is 2'-deoxymugineic-acid 2'-dioxygenase of Hordeum vulgare (Barley).